Reading from the N-terminus, the 429-residue chain is Histidinol dehydrogenase (429 aa).

NAD(+) contacts are provided by Y127, Q188, and N211. Substrate-binding residues include S234, Q256, and H259. Q256 and H259 together coordinate Zn(2+). Catalysis depends on proton acceptor residues E324 and H325. The substrate site is built by H325, D358, E412, and H417. D358 is a binding site for Zn(2+). Position 417 (H417) interacts with Zn(2+).

This sequence belongs to the histidinol dehydrogenase family. It depends on Zn(2+) as a cofactor.

It carries out the reaction L-histidinol + 2 NAD(+) + H2O = L-histidine + 2 NADH + 3 H(+). It participates in amino-acid biosynthesis; L-histidine biosynthesis; L-histidine from 5-phospho-alpha-D-ribose 1-diphosphate: step 9/9. Catalyzes the sequential NAD-dependent oxidations of L-histidinol to L-histidinaldehyde and then to L-histidine. This chain is Histidinol dehydrogenase, found in Bacillus thuringiensis subsp. konkukian (strain 97-27).